We begin with the raw amino-acid sequence, 357 residues long: SrfA-induced gene J protein (357 aa).

Residues 1-29 form a disordered region; it reads MGRVEDQIKDNYNSLSHEGERLNREAKIE. Residues 5–51 are a coiled coil; it reads EDQIKDNYNSLSHEGERLNREAKIESEKLKNNAKLDAKDMKKDIDES. Basic and acidic residues predominate over residues 17–29; sequence HEGERLNREAKIE. Residues Asn-114, Asn-157, and Asn-172 are each glycosylated (N-linked (GlcNAc...) asparagine). Coiled-coil stretches lie at residues 150-177 and 223-270; these read KNFKRTANETQKDANRLTSDVKNESNKI and DETK…DAIE. Residues 290–307 traverse the membrane as a helical segment; the sequence is IWGSIGLIGGATATSYLF.

The protein localises to the membrane. The chain is SrfA-induced gene J protein (sigJ) from Dictyostelium discoideum (Social amoeba).